The primary structure comprises 676 residues: Electrogenic aspartate/glutamate antiporter SLC25A13, mitochondrial (676 aa).

Ala-2 is subject to N-acetylalanine. The tract at residues 2–295 (AAAKVALTKR…TLADIERIAP (294 aa)) is regulatory N-terminal domain. The Mitochondrial intermembrane portion of the chain corresponds to 2–332 (AAAKVALTKR…LLQLAESAYR (331 aa)). EF-hand domains are found at residues 51-86 (SQPNPKTVELLSGVVDQTKDGLISFQEFVAFESVLC), 87-122 (APDALFMVAFQLFDKAGKGEVTFEDVRQVFGQTTIH), 125-157 (IPFNWDSEFVQLHFGKERKRHLTYAEFTQFLLE), and 158-193 (IQLEHAKQAFVQRDNAKTGKVTAIDFRDIMVTIRPH). Asp-66, Thr-68, Asp-70, Leu-72, and Glu-77 together coordinate Ca(2+). The tract at residues 296-312 (LEEGMLPFNLAEAQRQQ) is linker loop domain. The interval 322 to 613 (FLLQLAESAY…LQRWFYVDFG (292 aa)) is carrier domain. 3 Solcar repeats span residues 327 to 419 (AESA…VRDK), 427 to 511 (VPLL…VKAS), and 519 to 607 (VSPG…LQRW). A helical membrane pass occupies residues 333–350 (FGLGSIAGAVGATAVYPI). At 351–393 (DLVKTRMQNQRSTGSFVGELMYKNSFDCFKKVLRYEGFFGLYR) the chain is on the mitochondrial matrix side. 2 positions are modified to N6-acetyllysine: Lys-354 and Lys-373. The chain crosses the membrane as a helical span at residues 394 to 413 (GLLPQLLGVAPEKAIKLTVN). Residues 414-436 (DFVRDKFMHKDGSVPLLAEIFAG) lie on the Mitochondrial intermembrane side of the membrane. Residues 437–450 (GCAGGSQVIFTNPL) traverse the membrane as a helical segment. The Mitochondrial matrix segment spans residues 451–485 (EIVKIRLQVAGEITTGPRVSALSVVRDLGFFGIYK). Lys-454 carries the post-translational modification N6-methyllysine. Lys-485 bears the N6-acetyllysine; alternate mark. N6-succinyllysine; alternate is present on Lys-485. A helical transmembrane segment spans residues 486–505 (GAKACFLRDIPFSAIYFPCY). The Mitochondrial intermembrane segment spans residues 506–524 (AHVKASFANEDGQVSPGSL). Residues 525–542 (LLAGAIAGMPAASLVTPA) form a helical membrane-spanning segment. The Mitochondrial matrix segment spans residues 543-581 (DVIKTRLQVAARAGQTTYSGVTDCFRKILREEGPKALWK). Position 581 is an N6-succinyllysine (Lys-581). A helical transmembrane segment spans residues 582–601 (GAGARVFRSSPQFGVTLLTY). The Mitochondrial intermembrane segment spans residues 602-676 (ELLQRWFYVD…STSKVTAVGS (75 aa)). Residues 614-676 (GVKPVGSELV…STSKVTAVGS (63 aa)) are C-terminal domain. Position 663 is an N6-acetyllysine (Lys-663). Ser-667 is modified (phosphoserine).

It belongs to the mitochondrial carrier (TC 2.A.29) family. Homodimer (via N-terminus).

The protein localises to the mitochondrion inner membrane. The enzyme catalyses L-aspartate(in) + L-glutamate(out) + H(+)(out) = L-aspartate(out) + L-glutamate(in) + H(+)(in). It catalyses the reaction 3-sulfino-L-alanine(out) + L-glutamate(in) + H(+)(in) = 3-sulfino-L-alanine(in) + L-glutamate(out) + H(+)(out). The catalysed reaction is 3-sulfino-L-alanine(out) + L-aspartate(in) = 3-sulfino-L-alanine(in) + L-aspartate(out). Its activity is regulated as follows. L-aspartate and 3-sulfino-L-alanine uptake are both inhibited by glisoxepide. Its function is as follows. Mitochondrial electrogenic aspartate/glutamate antiporter that favors efflux of aspartate and entry of glutamate and proton within the mitochondria as part of the malate-aspartate shuttle. Also mediates the uptake of L-cysteinesulfinate (3-sulfino-L-alanine) by mitochondria in exchange of L-glutamate and proton. Can also exchange L-cysteinesulfinate with aspartate in their anionic form without any proton translocation. Lacks transport activity towards gamma-aminobutyric acid (GABA). The protein is Electrogenic aspartate/glutamate antiporter SLC25A13, mitochondrial of Rattus norvegicus (Rat).